Reading from the N-terminus, the 63-residue chain is Cecropin-A (63 aa).

The first 22 residues, M1–A22, serve as a signal peptide directing secretion. The propeptide occupies A23–P26. The residue at position 61 (L61) is a Leucine amide.

It belongs to the cecropin family. Highest expression in fat body and hemocytes. Is also expressed in Malpighian tubules and to a much lesser extent in midgut. Not present in silk gland.

Its subcellular location is the secreted. In terms of biological role, cecropins have lytic and antibacterial activity against several Gram-positive and Gram-negative bacteria. The sequence is that of Cecropin-A (CECA) from Bombyx mori (Silk moth).